The sequence spans 564 residues: MLSDLDIAQAARLRPIHAVAADLGLTDDDIERYGRNIAKIDLAVLQRLTDHPRGRYIVVTAITPTPLGEGKTTTTIGLGQALARLGKRSVVTIRQPSMGPTFGIKGGAAGGGYSQVVPMEPFNLHLTGDIHAVGAAHNLLAAMIDNHLHHGNRLDIDPYTVSWTRVVDISDRALRQVIVGLGGKENGPVRQAQFDITVASEVMAILALTTGLHDLRQRLGRIVVAQTRDGAPVTADDLKAAGAMTVLLKEAIKPNLLQTLEGSPALVHCGPFANIAHGASSVLADLIGLHCADYVVTESGFGADIGFEKFCDIKCRASGLAPDAVVLVATVRALKAHSGRYAITAGKPLDPQLSEENPDDVAAGVANLTAQVRIAKLFGRPVVVAINRFPDDFPSEIEVVRQVARDAGAFEVVESFVFAEGGAGGYDLAQAVMAACEMPGKFTPLYPLDMSLRDKIETLATKVYGAARVEYTPEASRQLTRFEQQGYGALPICMAKTQLSISHDPKLRGAPSGYVFPIREVRLAAGAGFIYPLAGDIRTMPGLPAHPAAERIDIDADGRTVGLS.

65-72 (TPLGEGKT) is a binding site for ATP.

Belongs to the formate--tetrahydrofolate ligase family.

It carries out the reaction (6S)-5,6,7,8-tetrahydrofolate + formate + ATP = (6R)-10-formyltetrahydrofolate + ADP + phosphate. It functions in the pathway one-carbon metabolism; tetrahydrofolate interconversion. In Roseiflexus sp. (strain RS-1), this protein is Formate--tetrahydrofolate ligase.